We begin with the raw amino-acid sequence, 394 residues long: NAD(P)H-quinone oxidoreductase subunit H (394 aa).

It belongs to the complex I 49 kDa subunit family. NDH-1 can be composed of about 15 different subunits; different subcomplexes with different compositions have been identified which probably have different functions.

Its subcellular location is the cellular thylakoid membrane. It catalyses the reaction a plastoquinone + NADH + (n+1) H(+)(in) = a plastoquinol + NAD(+) + n H(+)(out). The catalysed reaction is a plastoquinone + NADPH + (n+1) H(+)(in) = a plastoquinol + NADP(+) + n H(+)(out). Functionally, NDH-1 shuttles electrons from an unknown electron donor, via FMN and iron-sulfur (Fe-S) centers, to quinones in the respiratory and/or the photosynthetic chain. The immediate electron acceptor for the enzyme in this species is believed to be plastoquinone. Couples the redox reaction to proton translocation, and thus conserves the redox energy in a proton gradient. Cyanobacterial NDH-1 also plays a role in inorganic carbon-concentration. This is NAD(P)H-quinone oxidoreductase subunit H from Trichormus variabilis (strain ATCC 29413 / PCC 7937) (Anabaena variabilis).